Consider the following 354-residue polypeptide: Regulatory protein RapD (354 aa).

TPR repeat units lie at residues 64-105 (FENQ…VKTA), 107-126 (KHAVHHFKKAEQYLAAIHNT), 130-163 (ADLYYQTAGAYYLMKSPPLSVQYVKKALHIYLHQ), 171-204 (ITCKLLLAVNYIDQERYEKAEQLFKEIIKKTQQL), 211-244 (CHAYYNLGFLKATEKKDQEALLYFRKVLKNQEFE), and 321-353 (IEAWVDLEVLLEDITEYYKKKDDFEKAAFFIMR).

It belongs to the Rap family.

The protein localises to the cytoplasm. The chain is Regulatory protein RapD (rapD) from Bacillus subtilis (strain 168).